The chain runs to 366 residues: S-adenosylmethionine:tRNA ribosyltransferase-isomerase (366 aa).

This sequence belongs to the QueA family. As to quaternary structure, monomer.

It is found in the cytoplasm. It catalyses the reaction 7-aminomethyl-7-carbaguanosine(34) in tRNA + S-adenosyl-L-methionine = epoxyqueuosine(34) in tRNA + adenine + L-methionine + 2 H(+). It participates in tRNA modification; tRNA-queuosine biosynthesis. In terms of biological role, transfers and isomerizes the ribose moiety from AdoMet to the 7-aminomethyl group of 7-deazaguanine (preQ1-tRNA) to give epoxyqueuosine (oQ-tRNA). This is S-adenosylmethionine:tRNA ribosyltransferase-isomerase from Parasynechococcus marenigrum (strain WH8102).